The chain runs to 151 residues: Histone H2A.2.2 (151 aa).

An N-acetylmethionine modification is found at Met-1. The interval Glu-129 to Ala-151 is disordered. The segment covering Lys-139–Ala-151 has biased composition (basic residues). Short sequence motifs (SPKK motif) lie at residues Ser-140–Lys-143 and Ser-147–Lys-150.

This sequence belongs to the histone H2A family. The nucleosome is a histone octamer containing two molecules each of H2A, H2B, H3 and H4 assembled in one H3-H4 heterotetramer and two H2A-H2B heterodimers. The octamer wraps approximately 147 bp of DNA. Phosphorylated within its C-terminal part, probably at the SPKK motifs.

The protein localises to the nucleus. The protein resides in the chromosome. Its function is as follows. Core component of nucleosome. Nucleosomes wrap and compact DNA into chromatin, limiting DNA accessibility to the cellular machineries which require DNA as a template. Histones thereby play a central role in transcription regulation, DNA repair, DNA replication and chromosomal stability. DNA accessibility is regulated via a complex set of post-translational modifications of histones, also called histone code, and nucleosome remodeling. In Triticum aestivum (Wheat), this protein is Histone H2A.2.2.